A 257-amino-acid polypeptide reads, in one-letter code: Succinate dehydrogenase subunit 5, mitochondrial (257 aa).

The transit peptide at 1-89 (MGTLGRAIHT…AMGMGQVRRF (89 aa)) directs the protein to the mitochondrion.

As to quaternary structure, component of complex II composed of eight subunits in plants: four classical SDH subunits SDH1, SDH2, SDH3 and SDH4 (a flavoprotein (FP), an iron-sulfur protein (IP), and a cytochrome b composed of a large and a small subunit.), as well as four subunits unknown in mitochondria from bacteria and heterotrophic eukaryotes.

The protein localises to the mitochondrion inner membrane. Its pathway is carbohydrate metabolism; tricarboxylic acid cycle. The protein is Succinate dehydrogenase subunit 5, mitochondrial of Arabidopsis thaliana (Mouse-ear cress).